A 196-amino-acid chain; its full sequence is Large ribosomal subunit protein uL6 (196 aa).

This sequence belongs to the universal ribosomal protein uL6 family. In terms of assembly, part of the 50S ribosomal subunit.

Its function is as follows. This protein binds to the 23S rRNA, and is important in its secondary structure. It is located near the subunit interface in the base of the L7/L12 stalk, and near the tRNA binding site of the peptidyltransferase center. This Archaeoglobus fulgidus (strain ATCC 49558 / DSM 4304 / JCM 9628 / NBRC 100126 / VC-16) protein is Large ribosomal subunit protein uL6.